A 426-amino-acid chain; its full sequence is MSGGVYGGDEVGALVFDIGSFSVRAGYAGEDCPKADFPTTVGLLAAEEGGGLELEGEKEKKGKIFHIDTNALHVPRDGAEVMSPLKNGMIEDWECFRAILDHTYSKHVKSEPNLHPVLMSEAPWNTRAKREKLTELMFEQYNIPAFFLCKTAVLTAFANGRSTGLVLDSGATHTTAIPVHDGYVLQQGIVKSPLAGDFISMQCRELFQEMAIDIIPPYMIAAKEPVREGAPPNWKKKEKLPQVSKSWHNYMCNEVIQDFQASVLQVSDSPYDEQVAAQMPTVHYEMPNGYNTDYGAERLRIPEGLFDPSNVKGLSGNTMLGVGHVVTTSIGMCDIDIRPGLYGSVIVTGGNTLLQGFTDRLNRELSQKTPPSMRLKLIASNSTMERKFSPWIGGSILASLGTFQQMWISKQEYEEGGKQCVERKCP.

Residues 39-82 (TTVGLLAAEEGGGLELEGEKEKKGKIFHIDTNALHVPRDGAEVM) form an essential for mediating its function in dendritic development; may contribute to neuronal-specific targeting region.

This sequence belongs to the actin family. In terms of assembly, component of the multiprotein chromatin-remodeling complexes SWI/SNF: SWI/SNF-A (BAF), SWI/SNF-B (PBAF) and related complexes. The canonical complex contains a catalytic subunit (either SMARCA4/BRG1/BAF190A or SMARCA2/BRM/BAF190B) and at least SMARCE1, ACTL6A/BAF53, SMARCC1/BAF155, SMARCC2/BAF170, and SMARCB1/SNF5/BAF47. Other subunits specific to each of the complexes may also be present permitting several possible combinations developmentally and tissue specific. Component of the BAF complex, which includes at least actin (ACTB), ARID1A/BAF250A, ARID1B/BAF250B, SMARCA2/BRM, SMARCA4/BRG1/BAF190A, ACTL6A/BAF53, ACTL6B/BAF53B, SMARCE1/BAF57, SMARCC1/BAF155, SMARCC2/BAF170, SMARCB1/SNF5/INI1, and one or more SMARCD1/BAF60A, SMARCD2/BAF60B, or SMARCD3/BAF60C. Component of neuron-specific chromatin remodeling complex (nBAF complex) composed of at least, ARID1A/BAF250A or ARID1B/BAF250B, SMARCD1/BAF60A or SMARCD2/BAF60B or SMARCD3/BAF60C, SMARCA2/BRM/BAF190B, SMARCA4/BRG1/BAF190A, SMARCB1/BAF47, SMARCC1/BAF155, SMARCE1/BAF57, SMARCC2/BAF170, DPF1/BAF45B, DPF3/BAF45C, ACTL6B/BAF53B and actin (ACTB). Note that the nBAF complex is polymorphic in regard to the ATPase, SMARCA2 and SMARCA4 occupying mutually exclusive positions. May be a component of the SWI/SNF-B (PBAF) chromatin remodeling complex, at least composed of SMARCA4/BRG1, SMARCB1/BAF47/SNF5, ACTL6A/BAF53A or ACTL6B/BAF53B, SMARCE1/BAF57, SMARCD1/BAF60A, SMARCD2/BAF60B, perhaps SMARCD3/BAF60C, SMARCC1/BAF155, SMARCC2/BAF170, PBRM1/BAF180, ARID2/BAF200 and actin.

It localises to the nucleus. In terms of biological role, involved in transcriptional activation and repression of select genes by chromatin remodeling (alteration of DNA-nucleosome topology). Component of SWI/SNF chromatin remodeling complexes that carry out key enzymatic activities, changing chromatin structure by altering DNA-histone contacts within a nucleosome in an ATP-dependent manner. Belongs to the neuron-specific chromatin remodeling complex (nBAF complex), as such plays a role in remodeling mononucleosomes in an ATP-dependent fashion, and is required for postmitotic neural development and dendritic outgrowth. During neural development a switch from a stem/progenitor to a postmitotic chromatin remodeling mechanism occurs as neurons exit the cell cycle and become committed to their adult state. The transition from proliferating neural stem/progenitor cells to postmitotic neurons requires a switch in subunit composition of the npBAF and nBAF complexes. As neural progenitors exit mitosis and differentiate into neurons, npBAF complexes which contain ACTL6A/BAF53A and PHF10/BAF45A, are exchanged for homologous alternative ACTL6B/BAF53B and DPF1/BAF45B or DPF3/BAF45C subunits in neuron-specific complexes (nBAF). The npBAF complex is essential for the self-renewal/proliferative capacity of the multipotent neural stem cells. The nBAF complex along with CREST plays a role regulating the activity of genes essential for dendrite growth. ACTL6B/BAF53B is not essential for assembly of the nBAF complex but is required for targeting the complex and CREST to the promoter of genes essential for dendritic growth. Essential for neuronal maturation and dendrite development. In Bos taurus (Bovine), this protein is Actin-like protein 6B (ACTL6B).